The primary structure comprises 488 residues: Rhamnulokinase (488 aa).

13–17 is an ATP binding site; that stretch reads ASSGR. A disulfide bridge links C68 with C222. Residues G83 and 236 to 238 each bind substrate; that span reads HDT. Residue D237 is the Proton acceptor of the active site. T259 provides a ligand contact to ATP. N296 contributes to the substrate binding site. Q304 lines the ATP pocket. C353 and C370 form a disulfide bridge. G402 is a binding site for ATP. Cysteines 413 and 417 form a disulfide.

This sequence belongs to the rhamnulokinase family. Requires Mg(2+) as cofactor.

It catalyses the reaction L-rhamnulose + ATP = L-rhamnulose 1-phosphate + ADP + H(+). Its pathway is carbohydrate degradation; L-rhamnose degradation; glycerone phosphate from L-rhamnose: step 2/3. In terms of biological role, involved in the catabolism of L-rhamnose (6-deoxy-L-mannose). Catalyzes the transfer of the gamma-phosphate group from ATP to the 1-hydroxyl group of L-rhamnulose to yield L-rhamnulose 1-phosphate. The sequence is that of Rhamnulokinase from Klebsiella pneumoniae subsp. pneumoniae (strain ATCC 700721 / MGH 78578).